A 290-amino-acid chain; its full sequence is 33 kDa chaperonin (290 aa).

2 disulfide bridges follow: C235-C237 and C268-C271.

This sequence belongs to the HSP33 family. Under oxidizing conditions two disulfide bonds are formed involving the reactive cysteines. Under reducing conditions zinc is bound to the reactive cysteines and the protein is inactive.

The protein resides in the cytoplasm. Its function is as follows. Redox regulated molecular chaperone. Protects both thermally unfolding and oxidatively damaged proteins from irreversible aggregation. Plays an important role in the bacterial defense system toward oxidative stress. The chain is 33 kDa chaperonin from Streptococcus pyogenes serotype M2 (strain MGAS10270).